The primary structure comprises 196 residues: Pantothenic acid transporter PanT (196 aa).

A run of 6 helical transmembrane segments spans residues 10-30, 35-55, 58-78, 99-119, 131-151, and 161-181; these read AILA…QFVI, FPVK…ILGW, GAFL…IVTT, WGLF…YFVY, AAFA…FLFF, and YLLG…AVIL.

In E.coli forms a stable energy-coupling factor (ECF) transporter complex composed of 2 membrane-embedded substrate-binding protein (S component), 2 ATP-binding proteins (A and A' components) and 2 transmembrane proteins (T component), probably with a stoichiometry of 2:1:1:2. May be able to interact with more than 1 S component at a time.

It localises to the cell membrane. Functionally, probably a pantothenic acid-binding protein that interacts with the energy-coupling factor (ECF) ABC-transporter complex. Unlike classic ABC transporters this ECF transporter provides the energy necessary to transport a number of different substrates. The substrates themselves are bound by transmembrane, not extracytoplasmic soluble proteins. In Lactococcus lactis subsp. cremoris (strain MG1363), this protein is Pantothenic acid transporter PanT (panT).